The chain runs to 494 residues: ATP synthase subunit alpha, chloroplastic (494 aa).

Glycine 170 to threonine 177 provides a ligand contact to ATP.

This sequence belongs to the ATPase alpha/beta chains family. As to quaternary structure, F-type ATPases have 2 components, CF(1) - the catalytic core - and CF(0) - the membrane proton channel. CF(1) has five subunits: alpha(3), beta(3), gamma(1), delta(1), epsilon(1). CF(0) has four main subunits: a, b, b' and c.

Its subcellular location is the plastid. It localises to the chloroplast thylakoid membrane. The catalysed reaction is ATP + H2O + 4 H(+)(in) = ADP + phosphate + 5 H(+)(out). Its function is as follows. Produces ATP from ADP in the presence of a proton gradient across the membrane. The alpha chain is a regulatory subunit. This chain is ATP synthase subunit alpha, chloroplastic, found in Pinus thunbergii (Japanese black pine).